The chain runs to 531 residues: Ultra-long-chain fatty acid omega-hydroxylase (531 aa).

Residues 1-22 (MLPITDRLLHLLGLEKTAFRIY) lie on the Lumenal side of the membrane. Residues 23–43 (AVSTLLLFLLFFLFRLLLRFL) traverse the membrane as a helical segment. Topologically, residues 44–531 (RLCRSFYITC…LKVEPLPPRA (488 aa)) are cytoplasmic. Positions 335 and 475 each coordinate heme.

Belongs to the cytochrome P450 family. It depends on heme as a cofactor.

The protein localises to the endoplasmic reticulum membrane. It is found in the microsome membrane. It carries out the reaction triacontanoate + reduced [NADPH--hemoprotein reductase] + O2 = omega-hydroxy-triacontanoate + oxidized [NADPH--hemoprotein reductase] + H2O + H(+). The enzyme catalyses an omega-methyl-ultra-long-chain fatty acid + reduced [NADPH--hemoprotein reductase] + O2 = an omega-hydroxy-ultra-long-chain fatty acid + oxidized [NADPH--hemoprotein reductase] + H2O + H(+). Functionally, a cytochrome P450 monooxygenase involved in epidermal ceramide biosynthesis. Hydroxylates the terminal carbon (omega-hydroxylation) of ultra-long-chain fatty acyls (C28-C36) prior to ceramide synthesis. Contributes to the synthesis of three classes of omega-hydroxy-ultra-long chain fatty acylceramides having sphingosine, 6-hydroxysphingosine and phytosphingosine bases, all major lipid components that underlie the permeability barrier of the stratum corneum. Mechanistically, uses molecular oxygen inserting one oxygen atom into a substrate, and reducing the second into a water molecule, with two electrons provided by NADPH via cytochrome P450 reductase (CPR; NADPH-ferrihemoprotein reductase). The protein is Ultra-long-chain fatty acid omega-hydroxylase of Homo sapiens (Human).